A 66-amino-acid chain; its full sequence is U-limacoditoxin(59)-Dv128 (66 aa).

The N-terminal stretch at 1–20 (MRHLLVLLLICLSVIAMAQA) is a signal peptide. Residues 21 to 66 (TFGGGLGGAVGGRRRRDIGGGLGGAVGGRRRRDIGGGLGGAVGGKS) are 3 X 16 AA tandem repeats of [FI]-G-G-G-L-G-G-A-V-G-G-R-R-R-R-D. 2 repeat units span residues 22-37 (FGGGLGGAVGGRRRRD) and 38-53 (IGGGLGGAVGGRRRRD). Gly-31 carries the post-translational modification Glycine amide. A propeptide spanning residues 33 to 37 (RRRRD) is cleaved from the precursor. Gly-47 is subject to Glycine amide. Positions 49–53 (RRRRD) are excised as a propeptide. The 3; half-length repeat unit spans residues 54-64 (IGGGLGGAVGG).

Belongs to the limacoditoxin-59 family. Expressed by the venom secretory cell of the spine. The spine is a cuticular structure containing a single large nucleated venom-secreting cell at its base. It is an independent unit capable of producing, storing and injecting venom. On the back of D.vulnerans caterpillars, spines are grouped together by 50 to 100 to form scoli, of which there are eight in D.vulnerans.

The protein resides in the secreted. Functionally, probable toxin. This is U-limacoditoxin(59)-Dv128 from Doratifera vulnerans (Mottled cup moth).